The primary structure comprises 299 residues: Fibrinogen silencer-binding protein (299 aa).

A Glycyl lysine isopeptide (Lys-Gly) (interchain with G-Cter in SUMO2) cross-link involves residue Lys94.

As to quaternary structure, interacts with APBA1 (via PDZ 1 and 2 domains). Expressed in multiple tissues including brain.

It localises to the nucleus. Transcriptional repressor that down-regulates the expression of the fibrinogen gamma chain. Represses transcription of GSK3B gene promoter via its interaction with APBA1. The polypeptide is Fibrinogen silencer-binding protein (FSBP) (Homo sapiens (Human)).